A 247-amino-acid chain; its full sequence is Geranylgeranylglyceryl phosphate synthase (247 aa).

Residues Asp-23 and Ser-52 each coordinate Mg(2+). Residues 171-177 (YLEAGSG), 203-204 (GG), and 225-226 (GT) each bind sn-glycerol 1-phosphate.

Belongs to the GGGP/HepGP synthase family. Group II subfamily. Requires Mg(2+) as cofactor.

The protein resides in the cytoplasm. The catalysed reaction is sn-glycerol 1-phosphate + (2E,6E,10E)-geranylgeranyl diphosphate = sn-3-O-(geranylgeranyl)glycerol 1-phosphate + diphosphate. Its pathway is membrane lipid metabolism; glycerophospholipid metabolism. Functionally, prenyltransferase that catalyzes the transfer of the geranylgeranyl moiety of geranylgeranyl diphosphate (GGPP) to the C3 hydroxyl of sn-glycerol-1-phosphate (G1P). This reaction is the first ether-bond-formation step in the biosynthesis of archaeal membrane lipids. This Methanosarcina barkeri (strain Fusaro / DSM 804) protein is Geranylgeranylglyceryl phosphate synthase.